The primary structure comprises 180 residues: Crossover junction endodeoxyribonuclease RuvC (180 aa).

Active-site residues include Asp7, Glu66, and Asp138. The Mg(2+) site is built by Asp7, Glu66, and Asp138.

It belongs to the RuvC family. In terms of assembly, homodimer which binds Holliday junction (HJ) DNA. The HJ becomes 2-fold symmetrical on binding to RuvC with unstacked arms; it has a different conformation from HJ DNA in complex with RuvA. In the full resolvosome a probable DNA-RuvA(4)-RuvB(12)-RuvC(2) complex forms which resolves the HJ. Mg(2+) is required as a cofactor.

The protein resides in the cytoplasm. The catalysed reaction is Endonucleolytic cleavage at a junction such as a reciprocal single-stranded crossover between two homologous DNA duplexes (Holliday junction).. Functionally, the RuvA-RuvB-RuvC complex processes Holliday junction (HJ) DNA during genetic recombination and DNA repair. Endonuclease that resolves HJ intermediates. Cleaves cruciform DNA by making single-stranded nicks across the HJ at symmetrical positions within the homologous arms, yielding a 5'-phosphate and a 3'-hydroxyl group; requires a central core of homology in the junction. The consensus cleavage sequence is 5'-(A/T)TT(C/G)-3'. Cleavage occurs on the 3'-side of the TT dinucleotide at the point of strand exchange. HJ branch migration catalyzed by RuvA-RuvB allows RuvC to scan DNA until it finds its consensus sequence, where it cleaves and resolves the cruciform DNA. This chain is Crossover junction endodeoxyribonuclease RuvC, found in Burkholderia lata (strain ATCC 17760 / DSM 23089 / LMG 22485 / NCIMB 9086 / R18194 / 383).